The primary structure comprises 208 residues: Holliday junction branch migration complex subunit RuvA (208 aa).

Positions 1 to 63 (MIAFVSGPVA…EDSLTLYGFA (63 aa)) are domain I. The segment at 64 to 142 (NDDERQVFEL…EPVGAHIGQQ (79 aa)) is domain II. Residues 143-147 (GIGTP) form a flexible linker region. The domain III stretch occupies residues 148–208 (VTSGWRDQLQ…AALQTLNRAR (61 aa)).

This sequence belongs to the RuvA family. In terms of assembly, homotetramer. Forms an RuvA(8)-RuvB(12)-Holliday junction (HJ) complex. HJ DNA is sandwiched between 2 RuvA tetramers; dsDNA enters through RuvA and exits via RuvB. An RuvB hexamer assembles on each DNA strand where it exits the tetramer. Each RuvB hexamer is contacted by two RuvA subunits (via domain III) on 2 adjacent RuvB subunits; this complex drives branch migration. In the full resolvosome a probable DNA-RuvA(4)-RuvB(12)-RuvC(2) complex forms which resolves the HJ.

The protein resides in the cytoplasm. Functionally, the RuvA-RuvB-RuvC complex processes Holliday junction (HJ) DNA during genetic recombination and DNA repair, while the RuvA-RuvB complex plays an important role in the rescue of blocked DNA replication forks via replication fork reversal (RFR). RuvA specifically binds to HJ cruciform DNA, conferring on it an open structure. The RuvB hexamer acts as an ATP-dependent pump, pulling dsDNA into and through the RuvAB complex. HJ branch migration allows RuvC to scan DNA until it finds its consensus sequence, where it cleaves and resolves the cruciform DNA. The protein is Holliday junction branch migration complex subunit RuvA of Streptomyces griseus subsp. griseus (strain JCM 4626 / CBS 651.72 / NBRC 13350 / KCC S-0626 / ISP 5235).